The primary structure comprises 298 residues: Serine/threonine-protein kinase 1 (298 aa).

The Protein kinase domain maps to 38-276 (FIATRPMFEG…FKSLVSHPWF (239 aa)). ATP is bound by residues 45–53 (FEGGRNNVF) and lysine 65. Catalysis depends on aspartate 152, which acts as the Proton acceptor.

The protein belongs to the protein kinase superfamily. Ser/Thr protein kinase family.

It is found in the virion. Its subcellular location is the host cytoplasm. The catalysed reaction is L-seryl-[protein] + ATP = O-phospho-L-seryl-[protein] + ADP + H(+). The enzyme catalyses L-threonyl-[protein] + ATP = O-phospho-L-threonyl-[protein] + ADP + H(+). Its function is as follows. Essential for viral replication. It may mediate the virus progression through DNA replication. The polypeptide is Serine/threonine-protein kinase 1 (African swine fever virus (strain Badajoz 1971 Vero-adapted) (Ba71V)).